The primary structure comprises 73 residues: Hypotensin-like peptide (73 aa).

Positions 1–25 (MKMMIAIVFVSILLLMFSLSSTAMG) are cleaved as a signal peptide.

Expressed by the venom gland.

The protein localises to the secreted. Functionally, may potentiate the hypotensive effect of bradykinin. In Tityus serrulatus (Brazilian scorpion), this protein is Hypotensin-like peptide.